Here is a 246-residue protein sequence, read N- to C-terminus: Tyrosine recombinase XerD-like (246 aa).

The region spanning 1-72 (MINDINNFIE…AVNQFLFFLY (72 aa)) is the Core-binding (CB) domain. The Tyr recombinase domain occupies 84-246 (QETEKITLTQ…TPITLERYYR (163 aa)). Catalysis depends on residues lysine 149 and arginine 212. The O-(3'-phospho-DNA)-tyrosine intermediate role is filled by tyrosine 244.

It belongs to the 'phage' integrase family. XerD-like subfamily.

It localises to the cytoplasm. In terms of biological role, putative tyrosine recombinase. Not involved in the cutting and rejoining of the recombining DNA molecules on dif(SL) site. This chain is Tyrosine recombinase XerD-like, found in Streptococcus agalactiae serotype III (strain NEM316).